The following is a 375-amino-acid chain: ATP-sensitive inward rectifier potassium channel 15 (375 aa).

Topologically, residues 1–60 (MDAIHLGMSSAPLVKHTNGVGLKAHRPRVMSKSGHSNVRIDKVDGIYLLYLQDLWTTVID) are cytoplasmic. A helical transmembrane segment spans residues 61–87 (MKWRYKLTLFAATFVMTWFLFGVVYYA). Topologically, residues 88-113 (IAFIHGDLQLGESNSNHTPCIMKVDS) are extracellular. Residues 114–130 (LTGAFLFSLESQTTIGY) constitute an intramembrane region (helical; Pore-forming). Positions 127-132 (TIGYGV) match the Selectivity filter motif. The Extracellular segment spans residues 131–139 (GVRSITEEC). The helical transmembrane segment at 140–165 (PHAIFLLVAQLVITTLIEIFITGTFL) threads the bilayer. The Cytoplasmic segment spans residues 166–375 (AKIARPKKRA…RSLLLQQSNV (210 aa)).

This sequence belongs to the inward rectifier-type potassium channel (TC 1.A.2.1) family. KCNJ15 subfamily. As to quaternary structure, can form heteromultimeric channels with Kir5.1/KCNJ16. Interacts with PATJ. In terms of tissue distribution, expressed in the proximal segment of the nephron.

The protein localises to the membrane. It localises to the cell membrane. The enzyme catalyses K(+)(in) = K(+)(out). Its activity is regulated as follows. Channel activity is regulated by variations of cytosolic pH; reversibly inhibited by acidic pH values. Inhibited by Ba(2+) and Cs(+) in a voltage-dependent manner. In terms of biological role, inward rectifier potassium channels are characterized by a greater tendency to allow potassium to flow into the cell rather than out of it. Their voltage dependence is regulated by the concentration of extracellular potassium; as external potassium is raised, the voltage range of the channel opening shifts to more positive voltages. The inward rectification is mainly due to the blockage of outward current by internal magnesium. The chain is ATP-sensitive inward rectifier potassium channel 15 (Kcnj15) from Mus musculus (Mouse).